The sequence spans 266 residues: 3-methyl-2-oxobutanoate hydroxymethyltransferase (266 aa).

Residues D45 and D84 each contribute to the Mg(2+) site. Residues D45–S46, D84, and K112 contribute to the 3-methyl-2-oxobutanoate site. Residue E114 coordinates Mg(2+). The Proton acceptor role is filled by E181.

The protein belongs to the PanB family. Homodecamer; pentamer of dimers. It depends on Mg(2+) as a cofactor.

It localises to the cytoplasm. The enzyme catalyses 3-methyl-2-oxobutanoate + (6R)-5,10-methylene-5,6,7,8-tetrahydrofolate + H2O = 2-dehydropantoate + (6S)-5,6,7,8-tetrahydrofolate. Its pathway is cofactor biosynthesis; (R)-pantothenate biosynthesis; (R)-pantoate from 3-methyl-2-oxobutanoate: step 1/2. Functionally, catalyzes the reversible reaction in which hydroxymethyl group from 5,10-methylenetetrahydrofolate is transferred onto alpha-ketoisovalerate to form ketopantoate. In Pseudomonas putida (strain ATCC 700007 / DSM 6899 / JCM 31910 / BCRC 17059 / LMG 24140 / F1), this protein is 3-methyl-2-oxobutanoate hydroxymethyltransferase.